We begin with the raw amino-acid sequence, 654 residues long: tRNA 5-methylaminomethyl-2-thiouridine biosynthesis bifunctional protein MnmC (654 aa).

Residues Met-1–Ala-236 are tRNA (mnm(5)s(2)U34)-methyltransferase. Residues Ile-260–Ala-654 form an FAD-dependent cmnm(5)s(2)U34 oxidoreductase region.

In the N-terminal section; belongs to the methyltransferase superfamily. tRNA (mnm(5)s(2)U34)-methyltransferase family. It in the C-terminal section; belongs to the DAO family. FAD serves as cofactor.

It is found in the cytoplasm. The catalysed reaction is 5-aminomethyl-2-thiouridine(34) in tRNA + S-adenosyl-L-methionine = 5-methylaminomethyl-2-thiouridine(34) in tRNA + S-adenosyl-L-homocysteine + H(+). Functionally, catalyzes the last two steps in the biosynthesis of 5-methylaminomethyl-2-thiouridine (mnm(5)s(2)U) at the wobble position (U34) in tRNA. Catalyzes the FAD-dependent demodification of cmnm(5)s(2)U34 to nm(5)s(2)U34, followed by the transfer of a methyl group from S-adenosyl-L-methionine to nm(5)s(2)U34, to form mnm(5)s(2)U34. This is tRNA 5-methylaminomethyl-2-thiouridine biosynthesis bifunctional protein MnmC from Burkholderia thailandensis (strain ATCC 700388 / DSM 13276 / CCUG 48851 / CIP 106301 / E264).